Here is a 216-residue protein sequence, read N- to C-terminus: Orotate phosphoribosyltransferase (216 aa).

5-phospho-alpha-D-ribose 1-diphosphate is bound by residues R100, K104, H106, and 126–134 (EDLISTGGS). S130 provides a ligand contact to orotate.

This sequence belongs to the purine/pyrimidine phosphoribosyltransferase family. PyrE subfamily. Homodimer. Interacts with BrxC. Requires Mg(2+) as cofactor.

The enzyme catalyses orotidine 5'-phosphate + diphosphate = orotate + 5-phospho-alpha-D-ribose 1-diphosphate. It participates in pyrimidine metabolism; UMP biosynthesis via de novo pathway; UMP from orotate: step 1/2. In terms of biological role, catalyzes the transfer of a ribosyl phosphate group from 5-phosphoribose 1-diphosphate to orotate, leading to the formation of orotidine monophosphate (OMP). The sequence is that of Orotate phosphoribosyltransferase from Bacillus subtilis (strain 168).